The sequence spans 1132 residues: NUT family member 1 (1132 aa).

Disordered regions lie at residues M1–S56, A337–P365, L383–Y405, E476–R584, R693–D714, D873–S892, and P922–L1017. The span at A21 to D36 shows a compositional bias: pro residues. Positions A337–Q352 are enriched in basic residues. Residues E395–M404 are compositionally biased toward acidic residues. Composition is skewed to polar residues over residues S487–G497, M697–S706, and E883–S892. Residues G932 to K942 show a composition bias toward basic and acidic residues. Residues Q950 to G971 are compositionally biased toward polar residues. Residues S1026, S1029, and S1031 each carry the phosphoserine modification. A disordered region spans residues S1031–Q1132. Position 1046 is an N5-methylglutamine (Q1046). Residues G1123–Q1132 are compositionally biased toward basic residues.

Belongs to the NUT family. In terms of processing, methylated at Gln-1046 by N6AMT1. Phosphorylation on Ser-1026, Ser-1029 or Ser-1031 is important for cytoplasmic export. As to expression, specifically expressed in testis.

It is found in the cytoplasm. Its subcellular location is the nucleus. Its function is as follows. Plays a role in the regulation of proliferation. Regulates TERT expression by modulating SP1 binding to TERT promoter binding sites. The polypeptide is NUT family member 1 (Homo sapiens (Human)).